A 398-amino-acid chain; its full sequence is Mu-type opioid receptor (398 aa).

The Extracellular segment spans residues 1 to 66 (MDSSAGPGNI…CPQTGSPSMV (66 aa)). Residues asparagine 9, asparagine 31, asparagine 38, and asparagine 46 are each glycosylated (N-linked (GlcNAc...) asparagine). The chain crosses the membrane as a helical span at residues 67-91 (TAITIMALYSIVCVVGLFGNFLVMY). The Cytoplasmic segment spans residues 92 to 104 (VIVRYTKMKTATN). A helical membrane pass occupies residues 105 to 129 (IYIFNLALADALATSTLPFQSVNYL). Topologically, residues 130-140 (MGTWPFGNILC) are extracellular. Cysteines 140 and 217 form a disulfide. Residues 141 to 163 (KIVISIDYYNMFTSIFTLCTMSV) traverse the membrane as a helical segment. Topologically, residues 164 to 183 (DRYIAVCHPVKALDFRTPRN) are cytoplasmic. A Phosphotyrosine modification is found at tyrosine 166. A helical transmembrane segment spans residues 184–205 (AKIVNVCNWILSSAIGLPVMFM). The Extracellular segment spans residues 206-228 (ATTKYRQGSIDCTLTFSHPTWYW). A helical transmembrane segment spans residues 229–253 (ENLLKICVFIFAFIMPVLIITVCYG). Topologically, residues 254–277 (LMILRLKSVRMLSGSKEKDRNLRR) are cytoplasmic. The helical transmembrane segment at 278–304 (ITRMVLVVVAVFIVCWTPIHIYVIIKA) threads the bilayer. The Extracellular portion of the chain corresponds to 305-312 (LITIPETT). A helical transmembrane segment spans residues 313-336 (FQTVSWHFCIALGYTNSCLNPVLY). The short motif at 332–336 (NPVLY) is the NPxxY; plays a role in stabilizing the activated conformation of the receptor element. Residues 337–398 (AFLDENFKRC…NLEAETAPLP (62 aa)) lie on the Cytoplasmic side of the membrane. Cysteine 351 carries the S-palmitoyl cysteine lipid modification. Positions 362–383 (NSARIRQNTREHPSTANTVDRT) are disordered. Serine 363 is subject to Phosphoserine. Residue threonine 370 is modified to Phosphothreonine. Position 375 is a phosphoserine (serine 375). Threonine 394 carries the phosphothreonine modification.

It belongs to the G-protein coupled receptor 1 family. As to quaternary structure, forms homooligomers and heterooligomers with other GPCRs, such as OPRD1, OPRK1, OPRL1, NPFFR2, ADRA2A, SSTR2, CNR1 and CCR5 (probably in dimeric forms). Interacts with heterotrimeric G proteins; interaction with a heterotrimeric complex containing GNAI1, GNB1 and GNG2 stabilizes the active conformation of the receptor and increases its affinity for endomorphin-2, the synthetic opioid peptide DAMGO and for morphinan agonists. Interacts with PPL; the interaction disrupts agonist-mediated G-protein activation. Interacts (via C-terminus) with DNAJB4 (via C-terminus). Interacts with calmodulin; the interaction inhibits the constitutive activity of OPRM1; it abolishes basal and attenuates agonist-stimulated G-protein coupling. Interacts with FLNA, PLD2, RANBP9 and WLS and GPM6A. Interacts with RTP4. Interacts with SYP and GNAS. Interacts with RGS9, RGS17, RGS20, RGS4, PPP1R9B and HINT1. Isoform 9 interacts with GRPR. In terms of processing, phosphorylated. Differentially phosphorylated in basal and agonist-induced conditions. Agonist-mediated phosphorylation modulates receptor internalization. Phosphorylated by GRK2 in a agonist-dependent manner. Phosphorylation at Tyr-166 requires receptor activation, is dependent on non-receptor protein tyrosine kinase Src and results in a decrease in agonist efficacy by reducing G-protein coupling efficiency. Phosphorylated on tyrosine residues; the phosphorylation is involved in agonist-induced G-protein-independent receptor down-regulation. Phosphorylation at Ser-375 is involved in G-protein-dependent but not beta-arrestin-dependent activation of the ERK pathway. Ubiquitinated. A basal ubiquitination seems not to be related to degradation. Ubiquitination is increased upon formation of OPRM1:OPRD1 oligomers leading to proteasomal degradation; the ubiquitination is diminished by RTP4.

The protein localises to the cell membrane. It is found in the cell projection. It localises to the axon. Its subcellular location is the perikaryon. The protein resides in the dendrite. The protein localises to the endosome. Its function is as follows. Receptor for endogenous opioids such as beta-endorphin and endomorphin. Receptor for natural and synthetic opioids including morphine, heroin, DAMGO, fentanyl, etorphine, buprenorphin and methadone. Also activated by enkephalin peptides, such as Met-enkephalin or Met-enkephalin-Arg-Phe, with higher affinity for Met-enkephalin-Arg-Phe. Agonist binding to the receptor induces coupling to an inactive GDP-bound heterotrimeric G-protein complex and subsequent exchange of GDP for GTP in the G-protein alpha subunit leading to dissociation of the G-protein complex with the free GTP-bound G-protein alpha and the G-protein beta-gamma dimer activating downstream cellular effectors. The agonist- and cell type-specific activity is predominantly coupled to pertussis toxin-sensitive G(i) and G(o) G alpha proteins, GNAI1, GNAI2, GNAI3 and GNAO1 isoforms Alpha-1 and Alpha-2, and to a lesser extent to pertussis toxin-insensitive G alpha proteins GNAZ and GNA15. They mediate an array of downstream cellular responses, including inhibition of adenylate cyclase activity and both N-type and L-type calcium channels, activation of inward rectifying potassium channels, mitogen-activated protein kinase (MAPK), phospholipase C (PLC), phosphoinositide/protein kinase (PKC), phosphoinositide 3-kinase (PI3K) and regulation of NF-kappa-B. Also couples to adenylate cyclase stimulatory G alpha proteins. The selective temporal coupling to G-proteins and subsequent signaling can be regulated by RGSZ proteins, such as RGS9, RGS17 and RGS4. Phosphorylation by members of the GPRK subfamily of Ser/Thr protein kinases and association with beta-arrestins is involved in short-term receptor desensitization. Beta-arrestins associate with the GPRK-phosphorylated receptor and uncouple it from the G-protein thus terminating signal transduction. The phosphorylated receptor is internalized through endocytosis via clathrin-coated pits which involves beta-arrestins. The activation of the ERK pathway occurs either in a G-protein-dependent or a beta-arrestin-dependent manner and is regulated by agonist-specific receptor phosphorylation. Acts as a class A G-protein coupled receptor (GPCR) which dissociates from beta-arrestin at or near the plasma membrane and undergoes rapid recycling. Receptor down-regulation pathways are varying with the agonist and occur dependent or independent of G-protein coupling. Endogenous ligands induce rapid desensitization, endocytosis and recycling. Heterooligomerization with other GPCRs can modulate agonist binding, signaling and trafficking properties. Functionally, isoform 9 is involved in morphine-induced scratching and seems to cross-activate GRPR in response to morphine. The polypeptide is Mu-type opioid receptor (Oprm1) (Mus musculus (Mouse)).